The sequence spans 236 residues: Adenylate dimethylallyltransferase (236 aa).

It belongs to the isopentenyl transferase family.

The catalysed reaction is dimethylallyl diphosphate + AMP = N(6)-(dimethylallyl)adenosine 5'-phosphate + diphosphate. In terms of biological role, transfers dimethylallyl groups to AMP as part of the biosynthesis of cytokinin phytohormones. This chain is Adenylate dimethylallyltransferase (ipt), found in Allorhizobium ampelinum (strain ATCC BAA-846 / DSM 112012 / S4) (Agrobacterium vitis (strain S4)).